Reading from the N-terminus, the 308-residue chain is Cytochrome b (308 aa).

A run of 4 helical transmembrane segments spans residues 1–21, 45–66, 81–101, and 146–166; these read FGSLLGICLMTQIITGLLMAM, WLIRNLHANGASMFFICIYLHI, WNTGVILLLTLMATAFVGYVL, and FFALHFLLPFMIAGLTFIHLT. Positions 51 and 65 each coordinate heme b. The heme b site is built by H150 and H164. H169 provides a ligand contact to a ubiquinone. 3 consecutive transmembrane segments (helical) span residues 194-214, 256-276, and 288-308; these read TKDILGFLAMLVPLTALAMFS, LGGVLALAASVLILFLIPFLH, and LSQLLFWILVTNLLILTWVGS.

It belongs to the cytochrome b family. The cytochrome bc1 complex contains 11 subunits: 3 respiratory subunits (MT-CYB, CYC1 and UQCRFS1), 2 core proteins (UQCRC1 and UQCRC2) and 6 low-molecular weight proteins (UQCRH/QCR6, UQCRB/QCR7, UQCRQ/QCR8, UQCR10/QCR9, UQCR11/QCR10 and a cleavage product of UQCRFS1). This cytochrome bc1 complex then forms a dimer. The cofactor is heme b.

It localises to the mitochondrion inner membrane. Functionally, component of the ubiquinol-cytochrome c reductase complex (complex III or cytochrome b-c1 complex) that is part of the mitochondrial respiratory chain. The b-c1 complex mediates electron transfer from ubiquinol to cytochrome c. Contributes to the generation of a proton gradient across the mitochondrial membrane that is then used for ATP synthesis. In Asthenes dorbignyi (Creamy-breasted canastero), this protein is Cytochrome b (MT-CYB).